Consider the following 338-residue polypeptide: Activator of 90 kDa heat shock protein ATPase homolog 1 (338 aa).

K3 is modified (N6-acetyllysine). Residue K182 forms a Glycyl lysine isopeptide (Lys-Gly) (interchain with G-Cter in SUMO1) linkage. S193 carries the phosphoserine modification. K203 is covalently cross-linked (Glycyl lysine isopeptide (Lys-Gly) (interchain with G-Cter in SUMO2)). An N6-acetyllysine modification is found at K212. Y223 carries the phosphotyrosine; by ABL modification.

Belongs to the AHA1 family. Interacts with HSPCA/HSP90. Interacts with HSP90AA1; the interaction activates HSP90AA1 ATPase activity. Interacts with HSP90AB1. Interacts with GCH1. Interacts with SRPK1. Interacts with FLCN. In terms of processing, phosphorylation at Tyr-223 enhances binding to chaperone HSP90AA1.

It is found in the cytoplasm. Its subcellular location is the cytosol. The protein localises to the endoplasmic reticulum. Functionally, acts as a co-chaperone of HSP90AA1. Activates the ATPase activity of HSP90AA1 leading to increase in its chaperone activity. Competes with the inhibitory co-chaperone FNIP1 for binding to HSP90AA1, thereby providing a reciprocal regulatory mechanism for chaperoning of client proteins. Competes with the inhibitory co-chaperone TSC1 for binding to HSP90AA1, thereby providing a reciprocal regulatory mechanism for chaperoning of client proteins. The polypeptide is Activator of 90 kDa heat shock protein ATPase homolog 1 (Ahsa1) (Mus musculus (Mouse)).